The sequence spans 430 residues: Enolase (430 aa).

Glutamine 163 is a binding site for (2R)-2-phosphoglycerate. The Proton donor role is filled by glutamate 205. Aspartate 242, glutamate 287, and aspartate 314 together coordinate Mg(2+). Positions 339, 368, 369, and 390 each coordinate (2R)-2-phosphoglycerate. The active-site Proton acceptor is the lysine 339.

This sequence belongs to the enolase family. Requires Mg(2+) as cofactor.

The protein localises to the cytoplasm. Its subcellular location is the secreted. The protein resides in the cell surface. The catalysed reaction is (2R)-2-phosphoglycerate = phosphoenolpyruvate + H2O. It functions in the pathway carbohydrate degradation; glycolysis; pyruvate from D-glyceraldehyde 3-phosphate: step 4/5. Catalyzes the reversible conversion of 2-phosphoglycerate (2-PG) into phosphoenolpyruvate (PEP). It is essential for the degradation of carbohydrates via glycolysis. This is Enolase from Clostridioides difficile (strain 630) (Peptoclostridium difficile).